Consider the following 133-residue polypeptide: UPF0292 protein TK1411 (133 aa).

A Toprim domain is found at 20–100; it reads EGALIVEGLR…SVDIETWKEL (81 aa). Glu-26, Asp-69, and Asp-71 together coordinate Mg(2+).

Belongs to the UPF0292 family. It depends on Mg(2+) as a cofactor.

This Thermococcus kodakarensis (strain ATCC BAA-918 / JCM 12380 / KOD1) (Pyrococcus kodakaraensis (strain KOD1)) protein is UPF0292 protein TK1411.